The primary structure comprises 604 residues: Ectonucleoside triphosphate diphosphohydrolase 7 (604 aa).

Topologically, residues 1–28 (MARISFSYLCPASWYFTVPTVSPFLRQR) are cytoplasmic. A helical transmembrane segment spans residues 29 to 49 (VAFLGLFFISCLLLLMLIIDF). The Vesicular portion of the chain corresponds to 50–546 (RHWSASLPRD…QAHGSWFRLS (497 aa)). The active-site Proton acceptor is the E217. N330 carries an N-linked (GlcNAc...) asparagine glycan. Residues C448 and C477 are joined by a disulfide bond. A helical membrane pass occupies residues 547 to 567 (FVYNHYLFFACILVVLLAIVL). Residues 568–604 (YLLRLRRIHHRQTRASAPLDLLWLEEVVPMMGVQVGP) are Cytoplasmic-facing.

Belongs to the GDA1/CD39 NTPase family. Ca(2+) serves as cofactor. Mg(2+) is required as a cofactor.

It localises to the cytoplasmic vesicle membrane. It carries out the reaction a ribonucleoside 5'-triphosphate + H2O = a ribonucleoside 5'-diphosphate + phosphate + H(+). It catalyses the reaction UTP + H2O = UDP + phosphate + H(+). The enzyme catalyses GTP + H2O = GDP + phosphate + H(+). The catalysed reaction is CTP + H2O = CDP + phosphate + H(+). Its function is as follows. Catalyzes the hydrolysis of nucleoside triphosphates and diphosphates in a calcium- or magnesium-dependent manner. Preferentially hydrolyzes nucleoside 5'-triphosphates, with substrate preference for UTP &gt; GTP &gt; CTP. Hydrolyzes ATP and nucleoside diphosphates only to a minor extent. This chain is Ectonucleoside triphosphate diphosphohydrolase 7 (ENTPD7), found in Pongo abelii (Sumatran orangutan).